We begin with the raw amino-acid sequence, 742 residues long: Two-component response regulator-like PRR37 (742 aa).

The region spanning 63-181 is the Response regulatory domain; it reads KVLLVDSDDS…ELKNLWQHVW (119 aa). Over residues 186–195 the composition is skewed to low complexity; sequence SSSGSGSESG. 7 disordered regions span residues 186-249, 290-346, 377-402, 478-517, 533-568, 590-671, and 697-742; these read SSSG…SWTK, PCTS…PLQN, QQAA…NRDN, MKSN…NKER, FHPA…GEVQ, NGGS…GNDM, and NFGK…AADR. Residues 236–248 are compositionally biased toward polar residues; sequence DNGSGTQAQSSWT. Positions 299-313 are enriched in basic and acidic residues; the sequence is KQKETNDDFKGKDLE. Polar residues predominate over residues 318–330; the sequence is RNLNTAYQSSPNE. A compositionally biased stretch (basic and acidic residues) spans 331 to 341; it reads RSIKPTDRRNE. The span at 490–502 shows a compositional bias: low complexity; sequence GSNGSSNNNDMGS. Polar residues predominate over residues 503–512; that stretch reads TTKNVVTKPS. Positions 618 to 634 are enriched in low complexity; that stretch reads NGSNSGSNNGSNGQNGS. Positions 656–667 are enriched in gly residues; the sequence is GPGGGNGSGSGS. In terms of domain architecture, CCT spans 682–724; the sequence is RVAAVIKFRQKRKERNFGKKVRYQSRKRLAEQRPRVRGQFVRQ. Over residues 697 to 708 the composition is skewed to basic residues; sequence NFGKKVRYQSRK. Over residues 719–731 the composition is skewed to low complexity; sequence GQFVRQAVQDQQQ.

The protein belongs to the ARR-like family.

Its subcellular location is the nucleus. Probable transcription factor involved in the regulation of flowering time under long day (LD) conditions. Functions as a repressor of flowering. Controls flowering time by negatively regulating the expression of HD3A. Acts downstream of the phytochrome B to repress the expression of EHD1, an activator of the flowering promoter genes HD3A and RFT1. Controls photoperiodic flowering response. Seems to be one of the component of the circadian clock. Expression of several members of the ARR-like family is controlled by circadian rhythm. The particular coordinated sequential expression of PRR73, PRR37, PRR95, PRR59 and PPR1 result to circadian waves that may be at the basis of the endogenous circadian clock. The polypeptide is Two-component response regulator-like PRR37 (Oryza sativa subsp. japonica (Rice)).